Reading from the N-terminus, the 436-residue chain is ATP-dependent RNA helicase RhlB (436 aa).

The short motif at 9–37 (QKFADLDLLPQVIEGLEKKGFDYCTPIQA) is the Q motif element. The Helicase ATP-binding domain occupies 40–219 (LPVLLTGQDI…FEHMHNPEHV (180 aa)). 53 to 60 (AQTGTGKT) contributes to the ATP binding site. Residues 165–168 (DEAD) carry the DEAD box motif. The 146-residue stretch at 245–390 (ALLQTLIEEE…MSDYDASALL (146 aa)) folds into the Helicase C-terminal domain. Positions 398 to 436 (RLRTRNPQQRRSNNNGPRNGNRKPNQNRRPRQPRHNKEA) are disordered. Over residues 402–421 (RNPQQRRSNNNGPRNGNRKP) the composition is skewed to low complexity. A compositionally biased stretch (basic residues) spans 422–436 (NQNRRPRQPRHNKEA).

Belongs to the DEAD box helicase family. RhlB subfamily. In terms of assembly, component of the RNA degradosome, which is a multiprotein complex involved in RNA processing and mRNA degradation.

The protein resides in the cytoplasm. It carries out the reaction ATP + H2O = ADP + phosphate + H(+). DEAD-box RNA helicase involved in RNA degradation. Has RNA-dependent ATPase activity and unwinds double-stranded RNA. This chain is ATP-dependent RNA helicase RhlB, found in Vibrio atlanticus (strain LGP32) (Vibrio splendidus (strain Mel32)).